Consider the following 155-residue polypeptide: Protein-export protein SecB (155 aa).

Belongs to the SecB family. As to quaternary structure, homotetramer, a dimer of dimers. One homotetramer interacts with 1 SecA dimer.

Its subcellular location is the cytoplasm. One of the proteins required for the normal export of preproteins out of the cell cytoplasm. It is a molecular chaperone that binds to a subset of precursor proteins, maintaining them in a translocation-competent state. It also specifically binds to its receptor SecA. The chain is Protein-export protein SecB from Salmonella heidelberg (strain SL476).